The chain runs to 1066 residues: Pumilio homolog 2 (1066 aa).

The tract at residues 1–260 is interaction with SNAPIN; the sequence is MNHDFQALAL…ATVGLFDYNS (260 aa). A phosphoserine mark is found at serine 67, serine 82, and serine 102. The disordered stretch occupies residues 106–204; sequence KLDSRFRKGN…NPSEGLGPLP (99 aa). The segment covering 119–133 has biased composition (basic and acidic residues); it reads RDAETDGPEKGDQKG. Phosphoserine is present on residues serine 136, serine 178, and serine 182. 2 positions are modified to phosphothreonine: threonine 184 and threonine 396. The segment at 494–553 is disordered; that stretch reads STNGLFRPIGTQPPQQQQQQPSTNLQSNSFYGSSSLTNSSQSSSLFSHGPGQPGSTSLGF. The segment covering 505 to 514 has biased composition (low complexity); it reads QPPQQQQQQP. The segment covering 515–525 has biased composition (polar residues); sequence STNLQSNSFYG. Low complexity predominate over residues 526 to 540; it reads SSSLTNSSQSSSLFS. Phosphoserine occurs at positions 587 and 592. Residues 620–650 form a disordered region; sequence SPIGMPLPSQTPGHSLTPPPSLSSHGSSSSL. Positions 630 to 650 are enriched in low complexity; sequence TPGHSLTPPPSLSSHGSSSSL. Position 674 is an omega-N-methylarginine (arginine 674). Residues serine 684 and serine 700 each carry the phosphoserine modification. The 343-residue stretch at 706–1048 folds into the PUM-HD domain; it reads GRSRLLEDFR…HILAKLEKYY (343 aa). Pumilio repeat units lie at residues 726–761, 762–797, 798–835, 836–871, 872–907, 908–943, 944–979, and 983–1022; these read DLIGHIVEFSQDQHGSRFIQQKLERATPAERQMVFN, EILQAAYQLMTDVFGNYVIQKFFEFGSLDQKLALAT, RIRGHVLPLALQMYGCRVIQKALESISSDQQVISEMVK, ELDGHVLKCVKDQNGNHVVQKCIECVQPQSLQFIID, AFKGQVFVLSTHPYGCRVIQRILEHCTAEQTLPILE, ELHQHTEQLVQDQYGNYVIQHVLEHGRPEDKSKIVS, EIRGKVLALSQHKFASNVVEKCVTHASRAERALLID, and CQNDGPHSALYTMMKDQYANYVVQKMIDMAEPAQRKIIMH. An adenine-nucleotide binding in RNA target region spans residues 741–745; it reads SRFIQ. A uracil-nucleotide binding in RNA target region spans residues 777-781; the sequence is NYVIQ. Positions 813-817 are adenine-nucleotide binding in RNA target; it reads CRVIQ. Residues 851–855 are non-specific-nucleotide binding in RNA target; it reads NHVVQ. Positions 887–891 are adenine-nucleotide binding in RNA target; it reads CRVIQ. The tract at residues 923 to 927 is uracil-nucleotide binding in RNA target; it reads NYVIQ. Residues 959 to 963 form a guanine-nucleotide binding in RNA target region; the sequence is SNVVE. Residues 1002-1006 are uracil-nucleotide binding in RNA target; it reads NYVVQ.

In terms of assembly, homodimer; homodimerizes in vitro. Interacts with DAZ1, DAZL and NANOS1 via its pumilio repeats. Interacts with NANOS3. Interacts with SNAPIN. Recruits the CCR4-POP2-NOT deadenylase leading to translational inhibition and mRNA degradation. Interacts with DDX20. In case of viral infection, interacts with DHX58. Interacts with TRIM71 (via NHL repeats) in an RNA-dependent manner. As to expression, expressed in male germ cells of adult testis (at protein level). Highly expressed in testis and ovary. Predominantly expressed in stem cells and germ cells. Expressed at lower level in brain, heart, kidney, liver, muscle, placenta, intestine and stomach Expressed in cerebellum, corpus callosum, caudate nucleus, hippocampus, medulla oblongata and putamen. Expressed in all fetal tissues tested.

The protein localises to the cytoplasm. It localises to the cytoplasmic granule. It is found in the perinuclear region. Its function is as follows. Sequence-specific RNA-binding protein that acts as a post-transcriptional repressor by binding the 3'-UTR of mRNA targets. Binds to an RNA consensus sequence, the Pumilio Response Element (PRE), 5'-UGUANAUA-3', that is related to the Nanos Response Element (NRE) (, PubMed:21397187). Mediates post-transcriptional repression of transcripts via different mechanisms: acts via direct recruitment of the CCR4-POP2-NOT deadenylase leading to translational inhibition and mRNA degradation. Also mediates deadenylation-independent repression by promoting accessibility of miRNAs. Acts as a post-transcriptional repressor of E2F3 mRNAs by binding to its 3'-UTR and facilitating miRNA regulation. Plays a role in cytoplasmic sensing of viral infection. Represses a program of genes necessary to maintain genomic stability such as key mitotic, DNA repair and DNA replication factors. Its ability to repress those target mRNAs is regulated by the lncRNA NORAD (non-coding RNA activated by DNA damage) which, due to its high abundance and multitude of PUMILIO binding sites, is able to sequester a significant fraction of PUM1 and PUM2 in the cytoplasm. May regulate DCUN1D3 mRNA levels. May support proliferation and self-renewal of stem cells. Binds specifically to miRNA MIR199A precursor, with PUM1, regulates miRNA MIR199A expression at a postranscriptional level. The sequence is that of Pumilio homolog 2 (PUM2) from Homo sapiens (Human).